Consider the following 1107-residue polypeptide: Unconventional myosin-Ie (1107 aa).

A Myosin motor domain is found at 19 to 692 (SGVDDMVLLS…SLFLLEEMRE (674 aa)). 112–119 (GESGAGKT) lines the ATP pocket. The segment at 581 to 591 (PHYIRCIKPNE) is actin-binding. In terms of domain architecture, IQ spans 695 to 724 (YDGYARVIQKTWRKFVARKKYVQMREDASD). The TH1 domain maps to 730 to 922 (KERRRNSINR…NKVLQVSIGP (193 aa)). The disordered stretch occupies residues 920–1052 (IGPGLPKNAR…KPQPKPKPQV (133 aa)). 3 stretches are compositionally biased toward polar residues: residues 933 to 949 (RNTV…NNNY), 977 to 989 (SGNQ…SLYT), and 998 to 1012 (RQQS…QTPE). Phosphoserine is present on serine 1001. A compositionally biased stretch (pro residues) spans 1034 to 1051 (RPPPAGGRPKPQPKPKPQ). Residues 1050–1107 (PQVPQCKALYAYDAQDTDELSFNANDVIDIIKEDPSGWWTGRLRGKQGLFPNNYVTKI) enclose the SH3 domain.

Belongs to the TRAFAC class myosin-kinesin ATPase superfamily. Myosin family. As to quaternary structure, interacts with CALM and F-actin. Interacts (via SH3 domain) with SYNJ1, DNM1 and DNM2. Interacts with ARL14EP. Interacts with CARMIL1. In terms of tissue distribution, detected in brain stem, brain cortex, cerebellum, stomach, colon, heart, lung, liver, spleen and kidney. Detected in utricle, cochlea, outer hair cell bundle cuticular plate and vestibular epithelia (at protein level). Detected in cochlea and vestibular tissues. Detected in kidney, lung, spleen and intestine.

It localises to the cytoplasm. The protein resides in the cytoskeleton. It is found in the cytoplasmic vesicle. The protein localises to the clathrin-coated vesicle. Its subcellular location is the cell junction. Functionally, myosins are actin-based motor molecules with ATPase activity. Unconventional myosins serve in intracellular movements. Their highly divergent tails bind to membranous compartments, which are then moved relative to actin filaments. Binds to membranes containing anionic phospholipids via its tail domain. Involved in clathrin-mediated endocytosis and intracellular movement of clathrin-coated vesicles. Required for normal morphology of the glomerular basement membrane, normal development of foot processes by kidney podocytes and normal kidney function. In dendritic cells, may control the movement of class II-containing cytoplasmic vesicles along the actin cytoskeleton by connecting them with the actin network via ARL14EP and ARL14. The sequence is that of Unconventional myosin-Ie (Myo1e) from Rattus norvegicus (Rat).